We begin with the raw amino-acid sequence, 341 residues long: Anthranilate phosphoribosyltransferase (341 aa).

5-phospho-alpha-D-ribose 1-diphosphate contacts are provided by residues Gly80, 83 to 84, Thr88, 90 to 93, 108 to 116, and Ser120; these read GD, NIST, and KHGNRAVSS. Residue Gly80 participates in anthranilate binding. Ser92 is a binding site for Mg(2+). Asn111 is an anthranilate binding site. Arg166 serves as a coordination point for anthranilate. Mg(2+) contacts are provided by Asp225 and Glu226.

Belongs to the anthranilate phosphoribosyltransferase family. As to quaternary structure, homodimer. Mg(2+) serves as cofactor.

It carries out the reaction N-(5-phospho-beta-D-ribosyl)anthranilate + diphosphate = 5-phospho-alpha-D-ribose 1-diphosphate + anthranilate. It functions in the pathway amino-acid biosynthesis; L-tryptophan biosynthesis; L-tryptophan from chorismate: step 2/5. Its function is as follows. Catalyzes the transfer of the phosphoribosyl group of 5-phosphorylribose-1-pyrophosphate (PRPP) to anthranilate to yield N-(5'-phosphoribosyl)-anthranilate (PRA). This chain is Anthranilate phosphoribosyltransferase, found in Priestia megaterium (strain ATCC 12872 / QMB1551) (Bacillus megaterium).